The chain runs to 371 residues: Alanine racemase (371 aa).

The active-site Proton acceptor; specific for D-alanine is the K40. K40 is subject to N6-(pyridoxal phosphate)lysine. R138 provides a ligand contact to substrate. Residue Y267 is the Proton acceptor; specific for L-alanine of the active site. Residue M314 coordinates substrate.

It belongs to the alanine racemase family. Requires pyridoxal 5'-phosphate as cofactor.

It catalyses the reaction L-alanine = D-alanine. It functions in the pathway amino-acid biosynthesis; D-alanine biosynthesis; D-alanine from L-alanine: step 1/1. In terms of biological role, catalyzes the interconversion of L-alanine and D-alanine. May also act on other amino acids. The protein is Alanine racemase (alr) of Ligilactobacillus salivarius (strain UCC118) (Lactobacillus salivarius).